The primary structure comprises 585 residues: Protein DENND6B (585 aa).

The uDENN domain occupies 43 to 214 (ECVCVVTFDL…LPVMGVVVQV (172 aa)). The region spanning 246 to 373 (VHELDLFRCF…VKLKKPSRLK (128 aa)) is the cDENN domain. Positions 375-499 (LDTKPGLYTA…KSPHFDGWYR (125 aa)) constitute a dDENN domain.

This sequence belongs to the DENND6 family.

Its subcellular location is the recycling endosome. It is found in the cytoplasm. Functionally, guanine nucleotide exchange factor (GEF) for RAB14. Also has some, lesser GEF activity towards RAB35. The chain is Protein DENND6B (DENND6B) from Homo sapiens (Human).